Here is a 160-residue protein sequence, read N- to C-terminus: Lipoprotein signal peptidase (160 aa).

4 helical membrane-spanning segments follow: residues 7 to 27 (WFWL…YITV), 39 to 59 (LWPG…FSFF), 62 to 82 (GAVW…FLGW), and 96 to 116 (GFIL…GYVV). Residues Asp117 and Asp133 contribute to the active site. A helical transmembrane segment spans residues 126-146 (FPVFNLADTFINIGIFFLLLA).

It belongs to the peptidase A8 family.

Its subcellular location is the cell inner membrane. It carries out the reaction Release of signal peptides from bacterial membrane prolipoproteins. Hydrolyzes -Xaa-Yaa-Zaa-|-(S,diacylglyceryl)Cys-, in which Xaa is hydrophobic (preferably Leu), and Yaa (Ala or Ser) and Zaa (Gly or Ala) have small, neutral side chains.. It participates in protein modification; lipoprotein biosynthesis (signal peptide cleavage). In terms of biological role, this protein specifically catalyzes the removal of signal peptides from prolipoproteins. The chain is Lipoprotein signal peptidase from Gloeothece citriformis (strain PCC 7424) (Cyanothece sp. (strain PCC 7424)).